A 122-amino-acid polypeptide reads, in one-letter code: Large ribosomal subunit protein uL14 (122 aa).

This sequence belongs to the universal ribosomal protein uL14 family. In terms of assembly, part of the 50S ribosomal subunit. Forms a cluster with proteins L3 and L19. In the 70S ribosome, L14 and L19 interact and together make contacts with the 16S rRNA in bridges B5 and B8.

Its function is as follows. Binds to 23S rRNA. Forms part of two intersubunit bridges in the 70S ribosome. The sequence is that of Large ribosomal subunit protein uL14 from Campylobacter fetus subsp. fetus (strain 82-40).